Consider the following 224-residue polypeptide: Phosphoribosylformylglycinamidine synthase subunit PurQ (224 aa).

A Glutamine amidotransferase type-1 domain is found at 2-224 (KFAVIQFPGS…SILNHAEVKA (223 aa)). Cys86 acts as the Nucleophile in catalysis. Catalysis depends on residues His195 and Glu197.

As to quaternary structure, part of the FGAM synthase complex composed of 1 PurL, 1 PurQ and 2 PurS subunits.

It localises to the cytoplasm. The catalysed reaction is N(2)-formyl-N(1)-(5-phospho-beta-D-ribosyl)glycinamide + L-glutamine + ATP + H2O = 2-formamido-N(1)-(5-O-phospho-beta-D-ribosyl)acetamidine + L-glutamate + ADP + phosphate + H(+). It catalyses the reaction L-glutamine + H2O = L-glutamate + NH4(+). The protein operates within purine metabolism; IMP biosynthesis via de novo pathway; 5-amino-1-(5-phospho-D-ribosyl)imidazole from N(2)-formyl-N(1)-(5-phospho-D-ribosyl)glycinamide: step 1/2. Its function is as follows. Part of the phosphoribosylformylglycinamidine synthase complex involved in the purines biosynthetic pathway. Catalyzes the ATP-dependent conversion of formylglycinamide ribonucleotide (FGAR) and glutamine to yield formylglycinamidine ribonucleotide (FGAM) and glutamate. The FGAM synthase complex is composed of three subunits. PurQ produces an ammonia molecule by converting glutamine to glutamate. PurL transfers the ammonia molecule to FGAR to form FGAM in an ATP-dependent manner. PurS interacts with PurQ and PurL and is thought to assist in the transfer of the ammonia molecule from PurQ to PurL. This chain is Phosphoribosylformylglycinamidine synthase subunit PurQ, found in Lactobacillus delbrueckii subsp. bulgaricus (strain ATCC 11842 / DSM 20081 / BCRC 10696 / JCM 1002 / NBRC 13953 / NCIMB 11778 / NCTC 12712 / WDCM 00102 / Lb 14).